Reading from the N-terminus, the 318-residue chain is NADH-ubiquinone oxidoreductase chain 1 (318 aa).

A run of 9 helical transmembrane segments spans residues 2–22, 37–57, 69–89, 100–120, 136–156, 171–191, 231–251, 253–273, and 293–313; these read FLMN…FLTL, PNIV…KLFI, LMFT…WIPM, LGVL…LWSG, VAQT…IMMM, HMWL…STLA, IIMM…NPLF, ELFT…FLWV, and FLPL…LSAG.

This sequence belongs to the complex I subunit 1 family. In terms of assembly, core subunit of respiratory chain NADH dehydrogenase (Complex I) which is composed of 45 different subunits.

The protein resides in the mitochondrion inner membrane. The catalysed reaction is a ubiquinone + NADH + 5 H(+)(in) = a ubiquinol + NAD(+) + 4 H(+)(out). Its function is as follows. Core subunit of the mitochondrial membrane respiratory chain NADH dehydrogenase (Complex I) which catalyzes electron transfer from NADH through the respiratory chain, using ubiquinone as an electron acceptor. Essential for the catalytic activity and assembly of complex I. In Euphractus sexcinctus (Six-banded armadillo), this protein is NADH-ubiquinone oxidoreductase chain 1 (MT-ND1).